We begin with the raw amino-acid sequence, 644 residues long: ATP-dependent zinc metalloprotease FtsH (644 aa).

Over 1-4 (MAKN) the chain is Cytoplasmic. The chain crosses the membrane as a helical span at residues 5–25 (LILWLVIAVVLMSVFQSFGPS). Residues 26 to 98 (ESNGRKVDYS…VGEPPEEPSL (73 aa)) are Periplasmic-facing. The helical transmembrane segment at 99–119 (LASIFISWFPMLLLIGVWIFF) threads the bilayer. The Cytoplasmic segment spans residues 120-644 (MRQMQGGGGK…NTMSEQLGDK (525 aa)). Residue 192–199 (GPPGTGKT) participates in ATP binding. Residue histidine 414 coordinates Zn(2+). Glutamate 415 is a catalytic residue. Histidine 418 and aspartate 492 together coordinate Zn(2+). Residues 599–644 (RPPAGWEDPNGTNNSDSNGTPQAPRPVDEPRTPNPGNTMSEQLGDK) form a disordered region. 2 stretches are compositionally biased toward polar residues: residues 608–619 (NGTNNSDSNGTP) and 632–644 (NPGN…LGDK).

The protein in the central section; belongs to the AAA ATPase family. It in the C-terminal section; belongs to the peptidase M41 family. In terms of assembly, homohexamer. Zn(2+) is required as a cofactor.

Its subcellular location is the cell inner membrane. Functionally, acts as a processive, ATP-dependent zinc metallopeptidase for both cytoplasmic and membrane proteins. Plays a role in the quality control of integral membrane proteins. The chain is ATP-dependent zinc metalloprotease FtsH from Salmonella typhi.